The primary structure comprises 208 residues: Cysteine-rich protein 2 (208 aa).

Residues 5-57 (CPKCDKTVYFAEKVSSLGKDWHKFCLKCERCSKTLTPGGHAEHDGKPFCHKPC) enclose the LIM zinc-binding 1 domain. At K23 the chain carries N6-acetyllysine. Residues 98-119 (AEERKASGPPKGPSRASSVTTF) are disordered. The residue at position 104 (S104) is a Phosphoserine. Residues 126 to 178 (CPRCSKKVYFAEKVTSLGKDWHRPCLRCERCGKTLTPGGHAEHDGQPYCHKPC) form the LIM zinc-binding 2 domain. K138 and K144 each carry N6-acetyllysine.

As to quaternary structure, interacts with TGFB1I1. As to expression, widespread tissue expression; highest levels in the heart.

This Homo sapiens (Human) protein is Cysteine-rich protein 2 (CRIP2).